An 89-amino-acid polypeptide reads, in one-letter code: Small ribosomal subunit protein uS17 (89 aa).

This sequence belongs to the universal ribosomal protein uS17 family. Part of the 30S ribosomal subunit.

In terms of biological role, one of the primary rRNA binding proteins, it binds specifically to the 5'-end of 16S ribosomal RNA. The protein is Small ribosomal subunit protein uS17 of Aromatoleum aromaticum (strain DSM 19018 / LMG 30748 / EbN1) (Azoarcus sp. (strain EbN1)).